The primary structure comprises 33 residues: Protamine-2C (33 aa).

The disordered stretch occupies residues 1 to 33 (MPRRRRSSRRPVRRRRRPRVSRRRRRRGGRRRR).

In terms of tissue distribution, testis.

The protein resides in the nucleus. The protein localises to the chromosome. Its function is as follows. Protamines substitute for histones in the chromatin of sperm during the haploid phase of spermatogenesis. They compact sperm DNA into a highly condensed, stable and inactive complex. The sequence is that of Protamine-2C from Oncorhynchus mykiss (Rainbow trout).